The following is a 3224-amino-acid chain: E3 SUMO-protein ligase RanBP2 (3224 aa).

Residue threonine 19 is modified to Phosphothreonine. Residue serine 21 is modified to Phosphoserine. TPR repeat units lie at residues 26 to 59 (SMKG…QERD), 60 to 93 (PKAH…NPTQ), 94 to 128 (KDLV…FPGS), 165 to 201 (VHVN…RSSL), 287 to 319 (GHFY…AALC), 583 to 616 (QKTG…LKII), and 648 to 681 (EDAH…VSYW). A disordered region spans residues 760–802 (GPLYKNGSLRNADSEIKHSTPSPTRYSLSPSKSYKYSPKTPPR). Phosphothreonine is present on threonine 779. Phosphoserine occurs at positions 781, 788, and 837. The segment covering 785–797 (YSLSPSKSYKYSP) has biased composition (low complexity). Arginine 945 carries the post-translational modification Asymmetric dimethylarginine. Residues serine 948 and serine 955 each carry the phosphoserine modification. Residues 1001–1002 (FG) form repeat 1. A 22 X 2 AA repeats of F-G region spans residues 1001-3206 (FGKTNFVQPM…DTVKKIESFG (2206 aa)). The residue at position 1016 (arginine 1016) is an Asymmetric dimethylarginine; alternate. At arginine 1016 the chain carries Omega-N-methylarginine; alternate. Threonine 1098 is subject to Phosphothreonine. Copy 2 of the repeat occupies 1101–1102 (FG). Phosphoserine occurs at positions 1103, 1107, and 1110. A disordered region spans residues 1138 to 1174 (GKSVFGTPTLETANKNHETDGGSAHGDDDDDGPHFEP). The stretch at 1142-1143 (FG) is repeat 3. Threonine 1144 is modified (phosphothreonine). Phosphoserine occurs at positions 1160 and 1249. In terms of domain architecture, RanBD1 1 spans 1171–1307 (HFEPVVPLPD…FEEAQSILKA (137 aa)). Residue lysine 1350 forms a Glycyl lysine isopeptide (Lys-Gly) (interchain with G-Cter in SUMO2) linkage. The segment at 1351-1381 (KEGSWWHCNSCSLKNASTAKKCVSCQNLNPS) adopts a RanBP2-type 1 zinc-finger fold. Phosphothreonine occurs at positions 1396 and 1412. Lysine 1414 participates in a covalent cross-link: Glycyl lysine isopeptide (Lys-Gly) (interchain with G-Cter in SUMO2). The RanBP2-type 2 zinc finger occupies 1415 to 1444 (KEGHWDCSICLVRNEPTVSRCIACQNTKSA). Residues serine 1443, serine 1450, and serine 1456 each carry the phosphoserine modification. Copy 4 of the repeat occupies 1459 to 1460 (FG). The segment at 1479 to 1508 (KEGQWDCSACLVQNEGSSTKCAACQNPRKQ) adopts a RanBP2-type 3 zinc-finger fold. A phosphoserine mark is found at serine 1509 and serine 1520. Copy 5 of the repeat occupies 1523 to 1524 (FG). The RanBP2-type 4 zinc-finger motif lies at 1543 to 1572 (KEGQWDCSSCLVRNEANATRCVACQNPDKP). The interval 1569–1595 (PDKPSPSTSVPAPASFKFGTSETSKAP) is disordered. Phosphoserine is present on serine 1573. Low complexity predominate over residues 1573-1583 (SPSTSVPAPAS). The stretch at 1586–1587 (FG) is repeat 6. A Glycyl lysine isopeptide (Lys-Gly) (interchain with G-Cter in SUMO2) cross-link involves residue lysine 1596. Lysine 1605 is covalently cross-linked (Glycyl lysine isopeptide (Lys-Gly) (interchain with G-Cter in SUMO1); alternate). Lysine 1605 participates in a covalent cross-link: Glycyl lysine isopeptide (Lys-Gly) (interchain with G-Cter in SUMO2); alternate. The segment at 1606 to 1635 (KEGQWDCSVCLVRNEASATKCIACQNPGKQ) adopts a RanBP2-type 5 zinc-finger fold. Positions 1633–1653 (GKQNQTTSAVSTPASSETSKA) are enriched in polar residues. Residues 1633–1657 (GKQNQTTSAVSTPASSETSKAPKSG) form a disordered region. Residue lysine 1655 forms a Glycyl lysine isopeptide (Lys-Gly) (interchain with G-Cter in SUMO2) linkage. A Glycyl lysine isopeptide (Lys-Gly) (interchain with G-Cter in SUMO1); alternate cross-link involves residue lysine 1664. A Glycyl lysine isopeptide (Lys-Gly) (interchain with G-Cter in SUMO2); alternate cross-link involves residue lysine 1664. The RanBP2-type 6 zinc finger occupies 1665 to 1694 (KEGQWDCSVCLVRNEASATKCIACQNPGKQ). A compositionally biased stretch (polar residues) spans 1692-1712 (GKQNQTTSAVSTPASSETSKA). Positions 1692–1716 (GKQNQTTSAVSTPASSETSKAPKSG) are disordered. Lysine 1714 participates in a covalent cross-link: Glycyl lysine isopeptide (Lys-Gly) (interchain with G-Cter in SUMO2). Residue lysine 1723 forms a Glycyl lysine isopeptide (Lys-Gly) (interchain with G-Cter in SUMO1); alternate linkage. A Glycyl lysine isopeptide (Lys-Gly) (interchain with G-Cter in SUMO2); alternate cross-link involves residue lysine 1723. 2 RanBP2-type zinc fingers span residues 1724 to 1753 (KEGQ…PSKQ) and 1781 to 1810 (RKGQ…SKPT). Residues serine 1833 and serine 1835 each carry the phosphoserine modification. Repeat copies occupy residues 1852 to 1853 (FG) and 1861 to 1862 (FG). Phosphoserine is present on residues serine 1869 and serine 1871. Copy 9 of the repeat occupies 1900–1901 (FG). The tract at residues 1903 to 1928 (SEPGNQEKKSEKPLENGTGFQAQDIS) is disordered. Positions 1907–1916 (NQEKKSEKPL) are enriched in basic and acidic residues. A run of 2 repeats spans residues 1938 to 1939 (FG) and 1961 to 1962 (FG). N6-acetyllysine is present on lysine 1977. At threonine 2005 the chain carries Phosphothreonine. Serine 2008 carries the post-translational modification Phosphoserine. In terms of domain architecture, RanBD1 2 spans 2012 to 2148 (HFEPVVQMPE…FEECQRLLLD (137 aa)). Lysine 2022 is covalently cross-linked (Glycyl lysine isopeptide (Lys-Gly) (interchain with G-Cter in SUMO2)). Positions 2147–2287 (LDIPLQTPHK…SKSPAKLNQS (141 aa)) are interaction with BICD2. Threonine 2153 is modified (phosphothreonine). Residues 2188–2224 (QTKVTEEENKGSGTGAAGASDTTIKPNPENTGPTLEW) form a disordered region. Residues 2211–2220 (IKPNPENTGP) show a composition bias toward polar residues. Phosphoserine is present on residues serine 2246 and serine 2251. Repeat unit 12 spans residues 2260–2261 (FG). Phosphoserine is present on residues serine 2270, serine 2280, and serine 2290. A compositionally biased stretch (low complexity) spans 2273–2284 (SALSPSKSPAKL). Residues 2273-2307 (SALSPSKSPAKLNQSGTSVGTDEESDVTQEEERDG) are disordered. Threonine 2293 is subject to Phosphothreonine. The span at 2293–2305 (TDEESDVTQEEER) shows a compositional bias: acidic residues. Serine 2297 carries the phosphoserine modification. A RanBD1 3 domain is found at 2309-2445 (YFEPVVPLPD…FDEAKTAQEK (137 aa)). Phosphoserine is present on residues serine 2462, serine 2493, and serine 2510. The segment at 2486–2509 (DDVADATSEVEVSSTSETTPKAVV) is disordered. Positions 2492 to 2504 (TSEVEVSSTSETT) are enriched in low complexity. The stretch at 2516 to 2517 (FG) is repeat 13. Residue lysine 2522 forms a Glycyl lysine isopeptide (Lys-Gly) (interchain with G-Cter in SUMO2) linkage. At serine 2526 the chain carries Phosphoserine. 2 tandem repeats follow at residues 2535-2536 (FG) and 2545-2546 (FG). Positions 2556-2569 (NNSETSSVAQSGSE) are enriched in polar residues. The segment at 2556-2584 (NNSETSSVAQSGSESKVEPKKCELSKNSD) is disordered. Basic and acidic residues predominate over residues 2570 to 2584 (SKVEPKKCELSKNSD). Residue lysine 2592 forms a Glycyl lysine isopeptide (Lys-Gly) (interchain with G-Cter in SUMO) linkage. Lysine 2594 participates in a covalent cross-link: Glycyl lysine isopeptide (Lys-Gly) (interchain with G-Cter in SUMO1); alternate. Residue lysine 2594 forms a Glycyl lysine isopeptide (Lys-Gly) (interchain with G-Cter in SUMO2); alternate linkage. Lysine 2612 is covalently cross-linked (Glycyl lysine isopeptide (Lys-Gly) (interchain with G-Cter in SUMO2)). Position 2613 is a phosphothreonine (threonine 2613). Residues 2631-2635 (DVLIV) form an interaction with sumoylated RANGAP1 region. 2 tandem repeats follow at residues 2633 to 2685 (LIVY…KKLN) and 2711 to 2761 (IIVW…QKVQ). Residues 2633 to 2685 (LIVYELTPTAEQKALATKLKLPPTFFCYKNRPDYVSEEEEDDEDFETAVKKLN) form an interaction with UBE2I region. Positions 2633–2710 (LIVYELTPTA…ENTADNEKEC (78 aa)) are required for E3 SUMO-ligase activity. Residues 2633-2761 (LIVYELTPTA…DFQSELQKVQ (129 aa)) are 2 X 50 AA approximate repeats. Tyrosine 2666 bears the Phosphotyrosine mark. Phosphoserine occurs at positions 2668 and 2741. The interval 2686 to 2761 (GKLYLDGSEK…DFQSELQKVQ (76 aa)) is interaction with SUMO1. Residue threonine 2743 is modified to Phosphothreonine. A Glycyl lysine isopeptide (Lys-Gly) (interchain with G-Cter in SUMO2) cross-link involves residue lysine 2792. Residues 2793-2818 (SEEPDSITKSISSPSVSSETMDKPVD) form a disordered region. Over residues 2799 to 2810 (ITKSISSPSVSS) the composition is skewed to low complexity. Serine 2805 bears the Phosphoserine mark. Lysine 2815 is covalently cross-linked (Glycyl lysine isopeptide (Lys-Gly) (interchain with G-Cter in SUMO2)). 4 tandem repeats follow at residues 2840–2841 (FG), 2842–2843 (FG), 2863–2864 (FG), and 2880–2881 (FG). A Phosphoserine modification is found at serine 2900. In terms of domain architecture, RanBD1 4 spans 2911–3046 (HFEPIVSLPE…FEECQQNLMK (136 aa)). Residues 3067-3223 (FFDVCADGEP…RRITITECGQ (157 aa)) form the PPIase cyclophilin-type domain. A run of 3 repeats spans residues 3106-3107 (FG), 3189-3190 (FG), and 3205-3206 (FG). The residue at position 3207 (serine 3207) is a Phosphoserine.

It belongs to the RanBP2 E3 ligase family. As to quaternary structure, part of the nuclear pore complex. Forms a complex with NXT1, NXF1 and RANGAP1. Forms a tight complex with RANBP1 and UBE2I. Interacts with SUMO1 but not SUMO2. Interacts with PRKN. Interacts with sumoylated RANGAP1. Interacts with CDCA8. Interacts with PML (isoform PML-4). Interacts with BICD2. Interacts with MCM3AP isoform GANP. Interacts with COX11. Interacts with synaptic plasticity regulator PANTS. In terms of assembly, (Microbial infection) Interacts with HIV-1 Vpu protein; this interaction allows Vpu to down-regulate BLM sumoylation. Post-translationally, polyubiquitinated by PRKN, which leads to proteasomal degradation. In terms of processing, the inner channel of the NPC has a different redox environment from the cytoplasm and allows the formation of interchain disulfide bonds between some nucleoporins, the significant increase of these linkages upon oxidative stress reduces the permeability of the NPC.

It is found in the nucleus. Its subcellular location is the nucleus membrane. It localises to the nuclear pore complex. The protein localises to the nucleus envelope. It functions in the pathway protein modification; protein sumoylation. Its function is as follows. E3 SUMO-protein ligase which facilitates SUMO1 and SUMO2 conjugation by UBE2I. Involved in transport factor (Ran-GTP, karyopherin)-mediated protein import via the F-G repeat-containing domain which acts as a docking site for substrates. Binds single-stranded RNA (in vitro). May bind DNA. Component of the nuclear export pathway. Specific docking site for the nuclear export factor exportin-1. Inhibits EIF4E-dependent mRNA export. Sumoylates PML at 'Lys-490' which is essential for the proper assembly of PML-NB. Recruits BICD2 to the nuclear envelope and cytoplasmic stacks of nuclear pore complex known as annulate lamellae during G2 phase of cell cycle. Probable inactive PPIase with no peptidyl-prolyl cis-trans isomerase activity. The chain is E3 SUMO-protein ligase RanBP2 (RANBP2) from Homo sapiens (Human).